Here is a 351-residue protein sequence, read N- to C-terminus: D-alanine--D-alanine ligase (351 aa).

The region spanning 135-344 (KMAFAQAGLP…FAELVDQLIQ (210 aa)) is the ATP-grasp domain. Residue 171–226 (EQRLGYPCFVKPANLGSSVGIAKVRSRSELEKALDSAASYDRRIVIETGVKAREVE) coordinates ATP. Mg(2+) contacts are provided by Asp-297, Glu-311, and Asn-313.

This sequence belongs to the D-alanine--D-alanine ligase family. Mg(2+) serves as cofactor. Requires Mn(2+) as cofactor.

The protein localises to the cytoplasm. It carries out the reaction 2 D-alanine + ATP = D-alanyl-D-alanine + ADP + phosphate + H(+). The protein operates within cell wall biogenesis; peptidoglycan biosynthesis. In terms of biological role, cell wall formation. The chain is D-alanine--D-alanine ligase from Rippkaea orientalis (strain PCC 8801 / RF-1) (Cyanothece sp. (strain PCC 8801)).